Reading from the N-terminus, the 214-residue chain is Riboflavin kinase (214 aa).

The interval 1–91 (MRSIMEVETL…YCSIFEDGGA (91 aa)) is H-T-H motif-like. Residues 92-214 (PVMRGKVVTG…DGDEVEVTLE (123 aa)) are riboflavin kinase. A CDP-binding site is contributed by 101-106 (GLGEGQ). Positions 130 and 132 each coordinate Mg(2+). Residues T182 and E190 each contribute to the FMN site. CDP is bound at residue 195 to 198 (IKLR).

The protein belongs to the archaeal riboflavin kinase family. Mg(2+) serves as cofactor.

It catalyses the reaction riboflavin + CTP = CDP + FMN + H(+). It functions in the pathway cofactor biosynthesis; FMN biosynthesis; FMN from riboflavin (CTP route): step 1/1. Catalyzes the CTP-dependent phosphorylation of riboflavin (vitamin B2) to form flavin mononucleotide (FMN). In Methanocella arvoryzae (strain DSM 22066 / NBRC 105507 / MRE50), this protein is Riboflavin kinase (ribK).